Here is a 31-residue protein sequence, read N- to C-terminus: Cytochrome b6-f complex subunit 6 (31 aa).

Residues 4–24 form a helical membrane-spanning segment; sequence ITSYFGFLLVVLTITSALFIG.

It belongs to the PetL family. In terms of assembly, the 4 large subunits of the cytochrome b6-f complex are cytochrome b6, subunit IV (17 kDa polypeptide, PetD), cytochrome f and the Rieske protein, while the 4 small subunits are PetG, PetL, PetM and PetN. The complex functions as a dimer.

Its subcellular location is the plastid. The protein localises to the chloroplast thylakoid membrane. In terms of biological role, component of the cytochrome b6-f complex, which mediates electron transfer between photosystem II (PSII) and photosystem I (PSI), cyclic electron flow around PSI, and state transitions. PetL is important for photoautotrophic growth as well as for electron transfer efficiency and stability of the cytochrome b6-f complex. This chain is Cytochrome b6-f complex subunit 6, found in Jasminum nudiflorum (Winter jasmine).